The following is a 163-amino-acid chain: Large ribosomal subunit protein uL15 (163 aa).

Residues 1 to 43 (MKLNEIADNEGSRKKRTRVGRGIGSGKGKQSGRGGKGQTARSG) are disordered. The span at 21 to 37 (RGIGSGKGKQSGRGGKG) shows a compositional bias: gly residues.

The protein belongs to the universal ribosomal protein uL15 family. In terms of assembly, part of the 50S ribosomal subunit.

Its function is as follows. Binds to the 23S rRNA. This chain is Large ribosomal subunit protein uL15, found in Afipia carboxidovorans (strain ATCC 49405 / DSM 1227 / KCTC 32145 / OM5) (Oligotropha carboxidovorans).